Reading from the N-terminus, the 163-residue chain is Epithelial membrane protein 3 (163 aa).

The chain crosses the membrane as a helical span at residues 4–24; that stretch reads LLLVVSALHILILILLFVATL. N-linked (GlcNAc...) asparagine glycans are attached at residues Asn-49 and Asn-56. The next 3 membrane-spanning stretches (helical) occupy residues 66-86, 100-120, and 139-159; these read VQVL…LFMF, TGFC…IYAI, and FALA…YIHL.

Belongs to the PMP-22/EMP/MP20 family.

It is found in the membrane. In terms of biological role, probably involved in cell proliferation and cell-cell interactions. The sequence is that of Epithelial membrane protein 3 (EMP3) from Bos taurus (Bovine).